Here is a 502-residue protein sequence, read N- to C-terminus: ATP synthase subunit alpha (502 aa).

A disordered region spans residues 115–134; sequence IDGQGPINTTKTRPVEQKAT. 169 to 176 contacts ATP; that stretch reads GDRQTGKT.

It belongs to the ATPase alpha/beta chains family. F-type ATPases have 2 components, CF(1) - the catalytic core - and CF(0) - the membrane proton channel. CF(1) has five subunits: alpha(3), beta(3), gamma(1), delta(1), epsilon(1). CF(0) has three main subunits: a(1), b(2) and c(9-12). The alpha and beta chains form an alternating ring which encloses part of the gamma chain. CF(1) is attached to CF(0) by a central stalk formed by the gamma and epsilon chains, while a peripheral stalk is formed by the delta and b chains.

It is found in the cell membrane. It catalyses the reaction ATP + H2O + 4 H(+)(in) = ADP + phosphate + 5 H(+)(out). Produces ATP from ADP in the presence of a proton gradient across the membrane. The alpha chain is a regulatory subunit. This is ATP synthase subunit alpha from Staphylococcus haemolyticus (strain JCSC1435).